We begin with the raw amino-acid sequence, 219 residues long: Probable GTP-binding protein EngB (219 aa).

One can recognise an EngB-type G domain in the interval 31 to 205 (VGVEIAFAGR…LSILNEWCHP (175 aa)). GTP is bound by residues 39–46 (GRSNAGKS), 66–70 (GRTQL), 84–87 (DLPG), 151–154 (TKSD), and 184–186 (FSA). The Mg(2+) site is built by Ser46 and Thr68.

The protein belongs to the TRAFAC class TrmE-Era-EngA-EngB-Septin-like GTPase superfamily. EngB GTPase family. Mg(2+) serves as cofactor.

Its function is as follows. Necessary for normal cell division and for the maintenance of normal septation. This Shewanella putrefaciens (strain CN-32 / ATCC BAA-453) protein is Probable GTP-binding protein EngB.